Consider the following 342-residue polypeptide: MKIKVGILGASGYAGNELVRILLNHPKVEISYLGSSSSVGQNYQDLYPNTPLNLCFENKNLDELELDLLFLATPHKFSAKLLNENLLKKMKIIDLSADFRLKNPKDYELWYKFTHPNQELLQNAVYGLCELYKEEIKKASLVANPGCYTTCSILSLYPLFKEKIIDFSSVIIDAKSGVSGAGRSAKVENLFCEVNENIKAYNLALHRHTPEIEEHLSYAAKEKITLQFTPHLVPMQRGILISAYANLKEDLQEQDIRDIYTKYYQNNKFIRLLPPQSLPQTRWVKSSNFADINFSVDQRTKRVIVLGAIDNLIKGAAGQAVQNMNLMFDFDEDEGLKFFANL.

Residue C147 is part of the active site.

This sequence belongs to the NAGSA dehydrogenase family. Type 1 subfamily.

It is found in the cytoplasm. The enzyme catalyses N-acetyl-L-glutamate 5-semialdehyde + phosphate + NADP(+) = N-acetyl-L-glutamyl 5-phosphate + NADPH + H(+). The protein operates within amino-acid biosynthesis; L-arginine biosynthesis; N(2)-acetyl-L-ornithine from L-glutamate: step 3/4. Functionally, catalyzes the NADPH-dependent reduction of N-acetyl-5-glutamyl phosphate to yield N-acetyl-L-glutamate 5-semialdehyde. The chain is N-acetyl-gamma-glutamyl-phosphate reductase from Campylobacter jejuni subsp. jejuni serotype O:2 (strain ATCC 700819 / NCTC 11168).